A 342-amino-acid polypeptide reads, in one-letter code: Nucleoid-associated protein Shewmr7_2293 (342 aa).

This sequence belongs to the YejK family.

The protein localises to the cytoplasm. Its subcellular location is the nucleoid. This chain is Nucleoid-associated protein Shewmr7_2293, found in Shewanella sp. (strain MR-7).